Consider the following 487-residue polypeptide: Neuronal immunoglobulin domain-containing protein rig-3 (487 aa).

An N-terminal signal peptide occupies residues 1–23 (MGRLLAKMLFPLAMCLFVSAVSA). 2 consecutive Ig-like domains span residues 34–139 (PIVI…KTIK) and 247–354 (PEFE…PKVT). 2 cysteine pairs are disulfide-bonded: cysteine 61–cysteine 124 and cysteine 271–cysteine 327. Aspartate 466 carries the GPI-anchor amidated aspartate lipid modification. Positions 467–487 (SASDSKFPLALATLFFVCLFI) are cleaved as a propeptide — removed in mature form.

In terms of tissue distribution, expressed in the cholinergic motor neurons AS, VA and DA in the ventral nerve cord and in the mechanosensory ALM neurons in the midbody.

It is found in the cell projection. The protein resides in the axon. Its subcellular location is the synapse. The protein localises to the cell membrane. Functionally, cell surface protein which plays a role in the plasticity of cholinergic synapses at neuromuscular junctions and in the polarity of the mechanosensory neuron ALM, possibly by antagonizing Wnt signaling. The chain is Neuronal immunoglobulin domain-containing protein rig-3 from Caenorhabditis elegans.